Reading from the N-terminus, the 371-residue chain is UDP-N-acetylglucosamine--N-acetylmuramyl-(pentapeptide) pyrophosphoryl-undecaprenol N-acetylglucosamine transferase (371 aa).

UDP-N-acetyl-alpha-D-glucosamine-binding positions include 15–17, Asn126, Arg172, Ser199, Ile256, 275–280, and Gln301; these read TGG and ALTVSE.

The protein belongs to the glycosyltransferase 28 family. MurG subfamily.

It localises to the cell inner membrane. The catalysed reaction is di-trans,octa-cis-undecaprenyl diphospho-N-acetyl-alpha-D-muramoyl-L-alanyl-D-glutamyl-meso-2,6-diaminopimeloyl-D-alanyl-D-alanine + UDP-N-acetyl-alpha-D-glucosamine = di-trans,octa-cis-undecaprenyl diphospho-[N-acetyl-alpha-D-glucosaminyl-(1-&gt;4)]-N-acetyl-alpha-D-muramoyl-L-alanyl-D-glutamyl-meso-2,6-diaminopimeloyl-D-alanyl-D-alanine + UDP + H(+). The protein operates within cell wall biogenesis; peptidoglycan biosynthesis. Its function is as follows. Cell wall formation. Catalyzes the transfer of a GlcNAc subunit on undecaprenyl-pyrophosphoryl-MurNAc-pentapeptide (lipid intermediate I) to form undecaprenyl-pyrophosphoryl-MurNAc-(pentapeptide)GlcNAc (lipid intermediate II). This Francisella tularensis subsp. holarctica (strain FTNF002-00 / FTA) protein is UDP-N-acetylglucosamine--N-acetylmuramyl-(pentapeptide) pyrophosphoryl-undecaprenol N-acetylglucosamine transferase.